Consider the following 177-residue polypeptide: Large ribosomal subunit protein uL6 (177 aa).

It belongs to the universal ribosomal protein uL6 family. Part of the 50S ribosomal subunit.

In terms of biological role, this protein binds to the 23S rRNA, and is important in its secondary structure. It is located near the subunit interface in the base of the L7/L12 stalk, and near the tRNA binding site of the peptidyltransferase center. This Methylibium petroleiphilum (strain ATCC BAA-1232 / LMG 22953 / PM1) protein is Large ribosomal subunit protein uL6.